Here is a 181-residue protein sequence, read N- to C-terminus: Squamosa promoter-binding-like protein 5 (181 aa).

Residues 1–10 (MEGQRTQRRG) are compositionally biased toward basic residues. Residues 1-58 (MEGQRTQRRGYLKDKATVSNLVEEEMENGMDGEEEDGGDEDKRKKVMERVRGPSTDRV) form a disordered region. Positions 22–39 (VEEEMENGMDGEEEDGGD) are enriched in acidic residues. Over residues 40-51 (EDKRKKVMERVR) the composition is skewed to basic and acidic residues. The SBP-type zinc finger occupies 60–137 (SRLCQVDRCT…AGHNERRRKI (78 aa)). Zn(2+) is bound by residues C63, C68, C85, H88, C104, C107, H111, and C123. Positions 120–136 (KRSCRRRLAGHNERRRK) match the Bipartite nuclear localization signal motif. A disordered region spans residues 128 to 181 (AGHNERRRKISGDSFGEGSGRRGFSGQLIQTQERNRVDRKLPMTNSSFKRPQIR). Positions 170-181 (MTNSSFKRPQIR) are enriched in polar residues.

The cofactor is Zn(2+). Expressed in the inflorescence apical meristem and young flowers.

It localises to the nucleus. The protein resides in the cytoplasm. Functionally, trans-acting factor that binds specifically to the consensus nucleotide sequence 5'-TNCGTACAA-3' of AP1 promoter. Promotes both vegetative phase change and flowering. The protein is Squamosa promoter-binding-like protein 5 (SPL5) of Arabidopsis thaliana (Mouse-ear cress).